The sequence spans 341 residues: MTSADHVESAIAERREIVNEAVSEQLPVQKPERLYSASRYLLDAGGKRLRPTILLLAAESLADVEPLSADYRQFPSLPGDEVDVLSAAVSIEVIQSFTLIHDDIMDDDDLRRGVPAVHREYDLETAILAGDTLYSKAFEYMLDTGAPAERSVEALDELATTCTEICEGQALDVDFENRSDVTTEEYLEMVEFKTAVLYAAAASIPAILLGSDDETVEALHGYGLDIGRAFQIQDDLLDLTAPSDELGKQRGSDLVENKRTVITLHARDQGIDVEGLVSDDPSDAEIEAAVQTLEDAGSIDFAREMALDLVTSGKERLDVLPENEARQLLEDIADFLVERSY.

3 residues coordinate isopentenyl diphosphate: lysine 47, arginine 50, and glutamine 95. Residues aspartate 102 and aspartate 106 each contribute to the Mg(2+) site. Position 111 (arginine 111) interacts with an all-trans-polyprenyl diphosphate. Arginine 112 serves as a coordination point for isopentenyl diphosphate. Positions 193, 194, and 231 each coordinate an all-trans-polyprenyl diphosphate.

Belongs to the FPP/GGPP synthase family. As to quaternary structure, homodimer. Mg(2+) is required as a cofactor.

Its subcellular location is the cytoplasm. The catalysed reaction is isopentenyl diphosphate + (2E,6E,10E)-geranylgeranyl diphosphate = (2E,6E,10E,14E)-geranylfarnesyl diphosphate + diphosphate. Probably involved in biosynthesis of the precursor for C25 (sesterterpanyl chain) moiety of C20-C25 diether (2-O-sesterterpanyl-3-O-phytanyl-sn-glycer) membrane lipid. Catalyzes the condensation of isopentenyl pyrophosphate with the allylic pyrophosphates to yield geranylfarnesyl diphosphate (GFPP). Geranylgeranyl diphosphate (GGPP) is the preferred substrate, but dimethylallyl diphosphate (DMAPP) and farnesyl diphosphate (FPP) can also be used as allylic substrate. This Natronomonas pharaonis (strain ATCC 35678 / DSM 2160 / CIP 103997 / JCM 8858 / NBRC 14720 / NCIMB 2260 / Gabara) (Halobacterium pharaonis) protein is Geranylfarnesyl diphosphate synthase (idsA3).